A 350-amino-acid chain; its full sequence is Glyceraldehyde-3-phosphate dehydrogenase (350 aa).

NAD(+) contacts are provided by residues 13-14 (TI) and Gly-118. Residue 147–149 (SCN) participates in D-glyceraldehyde 3-phosphate binding. The Nucleophile role is filled by Cys-148. Arg-176 serves as a coordination point for NAD(+). 202-203 (HG) contacts D-glyceraldehyde 3-phosphate. Gln-309 is an NAD(+) binding site. Residues 327-350 (LEEDPEASMDATDSALGVLNSPPL) are disordered.

This sequence belongs to the glyceraldehyde-3-phosphate dehydrogenase family. Homotetramer.

It is found in the cytoplasm. The enzyme catalyses D-glyceraldehyde 3-phosphate + phosphate + NADP(+) = (2R)-3-phospho-glyceroyl phosphate + NADPH + H(+). The catalysed reaction is D-glyceraldehyde 3-phosphate + phosphate + NAD(+) = (2R)-3-phospho-glyceroyl phosphate + NADH + H(+). Its pathway is carbohydrate degradation; glycolysis; pyruvate from D-glyceraldehyde 3-phosphate: step 1/5. In Methanopyrus kandleri (strain AV19 / DSM 6324 / JCM 9639 / NBRC 100938), this protein is Glyceraldehyde-3-phosphate dehydrogenase.